Reading from the N-terminus, the 476-residue chain is Argininosuccinate lyase (476 aa).

Belongs to the lyase 1 family. Argininosuccinate lyase subfamily.

It localises to the cytoplasm. The catalysed reaction is 2-(N(omega)-L-arginino)succinate = fumarate + L-arginine. Its pathway is amino-acid biosynthesis; L-arginine biosynthesis; L-arginine from L-ornithine and carbamoyl phosphate: step 3/3. The polypeptide is Argininosuccinate lyase (Nitrosospira multiformis (strain ATCC 25196 / NCIMB 11849 / C 71)).